Here is a 501-residue protein sequence, read N- to C-terminus: Aldehyde dehydrogenase 1A1 (501 aa).

Serine 2 carries the post-translational modification N-acetylserine. 2 positions are modified to N6-acetyllysine: lysine 91 and lysine 128. Residues 167-170 (IPWN), 193-196 (KPAE), 226-227 (GP), and 246-247 (GS) each bind NAD(+). Lysine 252 carries the post-translational modification N6-acetyllysine. Glutamate 269 (proton acceptor) is an active-site residue. Residue 269-271 (ELG) participates in NAD(+) binding. Cysteine 303 functions as the Nucleophile in the catalytic mechanism. The interval 336–501 (LTPGVSQGPQ…VTIKISQKNS (166 aa)) is mediates interaction with PRMT3. At threonine 337 the chain carries Phosphothreonine. 349 to 353 (EQYEK) contributes to the NAD(+) binding site. Residues lysine 353 and lysine 367 each carry the N6-acetyllysine modification. 400–402 (EIF) serves as a coordination point for NAD(+). The residue at position 410 (lysine 410) is an N6-acetyllysine. At serine 413 the chain carries Phosphoserine. N6-acetyllysine occurs at positions 419 and 495.

This sequence belongs to the aldehyde dehydrogenase family. As to quaternary structure, homotetramer. Interacts with PRMT3; the interaction is direct, inhibits ALDH1A1 aldehyde dehydrogenase activity and is independent of the methyltransferase activity of PRMT3. Post-translationally, the N-terminus is blocked most probably by acetylation.

Its subcellular location is the cytoplasm. It localises to the cytosol. The protein resides in the cell projection. It is found in the axon. It carries out the reaction an aldehyde + NAD(+) + H2O = a carboxylate + NADH + 2 H(+). The enzyme catalyses all-trans-retinal + NAD(+) + H2O = all-trans-retinoate + NADH + 2 H(+). The catalysed reaction is 9-cis-retinal + NAD(+) + H2O = 9-cis-retinoate + NADH + 2 H(+). It catalyses the reaction 11-cis-retinal + NAD(+) + H2O = 11-cis-retinoate + NADH + 2 H(+). It carries out the reaction 13-cis-retinal + NAD(+) + H2O = 13-cis-retinoate + NADH + 2 H(+). The enzyme catalyses 3-deoxyglucosone + NAD(+) + H2O = 2-dehydro-3-deoxy-D-gluconate + NADH + 2 H(+). The catalysed reaction is (E)-4-hydroxynon-2-enal + NAD(+) + H2O = (E)-4-hydroxynon-2-enoate + NADH + 2 H(+). It catalyses the reaction malonaldehyde + NAD(+) + H2O = 3-oxopropanoate + NADH + 2 H(+). It carries out the reaction hexanal + NAD(+) + H2O = hexanoate + NADH + 2 H(+). The enzyme catalyses propanal + NAD(+) + H2O = propanoate + NADH + 2 H(+). The catalysed reaction is acetaldehyde + NAD(+) + H2O = acetate + NADH + 2 H(+). It catalyses the reaction benzaldehyde + NAD(+) + H2O = benzoate + NADH + 2 H(+). It carries out the reaction 4-aminobutanal + NAD(+) + H2O = 4-aminobutanoate + NADH + 2 H(+). It functions in the pathway cofactor metabolism; retinol metabolism. With respect to regulation, inhibited by duocarmycin analogs. Its function is as follows. Cytosolic dehydrogenase that catalyzes the irreversible oxidation of a wide range of aldehydes to their corresponding carboxylic acid. Functions downstream of retinol dehydrogenases and catalyzes the oxidation of retinaldehyde into retinoic acid, the second step in the oxidation of retinol/vitamin A into retinoic acid. This pathway is crucial to control the levels of retinol and retinoic acid, two important molecules which excess can be teratogenic and cytotoxic. Also oxidizes aldehydes resulting from lipid peroxidation like (E)-4-hydroxynon-2-enal/HNE, malonaldehyde and hexanal that form protein adducts and are highly cytotoxic. By participating for instance to the clearance of (E)-4-hydroxynon-2-enal/HNE in the lens epithelium prevents the formation of HNE-protein adducts and lens opacification. Also functions downstream of fructosamine-3-kinase in the fructosamine degradation pathway by catalyzing the oxidation of 3-deoxyglucosone, the carbohydrate product of fructosamine 3-phosphate decomposition, which is itself a potent glycating agent that may react with lysine and arginine side-chains of proteins. Also has an aminobutyraldehyde dehydrogenase activity and is probably part of an alternative pathway for the biosynthesis of GABA/4-aminobutanoate in midbrain, thereby playing a role in GABAergic synaptic transmission. The protein is Aldehyde dehydrogenase 1A1 of Ovis aries (Sheep).